Here is a 602-residue protein sequence, read N- to C-terminus: Elongation factor 4 (602 aa).

A tr-type G domain is found at 7-189; that stretch reads SKIRNFCIIA…AVVSRIPHPQ (183 aa). Residues 19 to 24 and 136 to 139 each bind GTP; these read DHGKST and NKVD.

Belongs to the TRAFAC class translation factor GTPase superfamily. Classic translation factor GTPase family. LepA subfamily.

Its subcellular location is the cell inner membrane. It catalyses the reaction GTP + H2O = GDP + phosphate + H(+). Its function is as follows. Required for accurate and efficient protein synthesis under certain stress conditions. May act as a fidelity factor of the translation reaction, by catalyzing a one-codon backward translocation of tRNAs on improperly translocated ribosomes. Back-translocation proceeds from a post-translocation (POST) complex to a pre-translocation (PRE) complex, thus giving elongation factor G a second chance to translocate the tRNAs correctly. Binds to ribosomes in a GTP-dependent manner. The sequence is that of Elongation factor 4 from Prochlorococcus marinus subsp. pastoris (strain CCMP1986 / NIES-2087 / MED4).